Consider the following 327-residue polypeptide: Ribosomal RNA small subunit methyltransferase H (327 aa).

S-adenosyl-L-methionine is bound by residues 42–44 (GGH), Asp61, Leu95, Asp109, and Gln116.

It belongs to the methyltransferase superfamily. RsmH family.

It is found in the cytoplasm. The enzyme catalyses cytidine(1402) in 16S rRNA + S-adenosyl-L-methionine = N(4)-methylcytidine(1402) in 16S rRNA + S-adenosyl-L-homocysteine + H(+). Specifically methylates the N4 position of cytidine in position 1402 (C1402) of 16S rRNA. The chain is Ribosomal RNA small subunit methyltransferase H from Desulfovibrio desulfuricans (strain ATCC 27774 / DSM 6949 / MB).